The chain runs to 155 residues: Cyanate hydratase (155 aa).

Catalysis depends on residues arginine 95, glutamate 98, and serine 121.

This sequence belongs to the cyanase family.

The enzyme catalyses cyanate + hydrogencarbonate + 3 H(+) = NH4(+) + 2 CO2. Catalyzes the reaction of cyanate with bicarbonate to produce ammonia and carbon dioxide. This is Cyanate hydratase from Pseudomonas syringae pv. tomato (strain ATCC BAA-871 / DC3000).